The chain runs to 355 residues: NAD-dependent protein deacylase sirtuin-6 (355 aa).

At Ser2 the chain carries N-acetylserine. Ser10 is modified (phosphoserine; by MAPK8). The Deacetylase sirtuin-type domain occupies 27–272 (PEELERKVWE…TRLMKHLGLE (246 aa)). An N6-acetyllysine modification is found at Lys33. The NAD(+) site is built by Ala53, Thr57, Phe64, Arg65, Trp71, Gln113, and His133. The active-site Proton acceptor is the His133. Residues Cys141, Cys144, and Cys166 each coordinate Zn(2+). A Glycyl lysine isopeptide (Lys-Gly) (interchain with G-Cter in ubiquitin) cross-link involves residue Lys170. Residue Cys177 coordinates Zn(2+). Residues Gly214, Ser216, Asn240, Gln242, and Val258 each contribute to the NAD(+) site. The segment at 284–355 (RALPPLPRPP…KRVKAKAVPS (72 aa)) is disordered. Residues 287–296 (PPLPRPPTPK) are compositionally biased toward pro residues. Thr294 carries the phosphothreonine modification. Residues Ser303 and Ser330 each carry the phosphoserine modification. The segment covering 343 to 355 (RPPKRVKAKAVPS) has biased composition (basic residues).

This sequence belongs to the sirtuin family. Class IV subfamily. In terms of assembly, homodimer; binds to nucleosomes and DNA ends as a homodimer. Interacts with RELA; interferes with RELA binding to target DNA. Interacts with SMARCA5; promoting recruitment of SMARCA5/SNF2H to double-strand breaks (DSBs) sites. Interacts with the mTORC2 complex; preventing the ability of SIRT6 to deacetylate FOXO1. Interacts with the CLOCK-BMAL1 complex; recruited by the CLOCK-BMAL1 complex to regulate expression of clock-controlled genes. Interacts with CSNK2A2; preventing CSNK2A2 localization to the nucleus. (Microbial infection) Interacts with Kaposi's sarcoma-associated herpesvirus protein VIRF-1; this interaction prevents SIRT6 deubiquitination by USP10. It depends on Zn(2+) as a cofactor. Post-translationally, acetylated at Lys-33. Deacetylation at Lys-33 by SIRT1 promotes homomultimerization and binding to double-strand breaks (DSBs) sites. In terms of processing, phosphorylation at Ser-10 by MAPK8/JNK1 in response to oxidative stress stimulates the mono-ADP-ribosyltransferase activity on PARP1, leading to PARP1 recruitment to double-strand breaks (DSBs). Monoubiquitinated at Lys-170 by STUB1/CHIP, preventing its degradation by the proteasome. Deubiquitinated by USP10, also preventing its degradation by the proteasome. Post-translationally, sumoylated, leading to specifically decrease ability to deacetylate histone H3 at 'Lys-56' (H3K56ac).

Its subcellular location is the nucleus. The protein localises to the chromosome. It localises to the telomere. It is found in the endoplasmic reticulum. It catalyses the reaction N(6)-acetyl-L-lysyl-[protein] + NAD(+) + H2O = 2''-O-acetyl-ADP-D-ribose + nicotinamide + L-lysyl-[protein]. The catalysed reaction is N(6)-tetradecanoyl-L-lysyl-[protein] + NAD(+) + H2O = 2''-O-tetradecanoyl-ADP-D-ribose + nicotinamide + L-lysyl-[protein]. It carries out the reaction N(6)-hexadecanoyl-L-lysyl-[protein] + NAD(+) + H2O = 2''-O-hexadecanoyl-ADP-D-ribose + nicotinamide + L-lysyl-[protein]. The enzyme catalyses L-lysyl-[protein] + NAD(+) = N(6)-(ADP-D-ribosyl)-L-lysyl-[protein] + nicotinamide + H(+). It catalyses the reaction L-arginyl-[protein] + NAD(+) = N(omega)-(ADP-D-ribosyl)-L-arginyl-[protein] + nicotinamide + H(+). Compared to the defatty-acylase activity, the protein deacetylase activity is weak in vitro, and requires activation. The histone deacetylase activity is strongly activated upon binding to nucleosomes and chromatin in vivo. Two molecules of SIRT6 associate with the acidic patch of one nucleosome, while the C-terminal disordered region of SIRT6 associates with nucleosomal DNA, leading to efficient histone deacetylation. The protein-lysine deacetylase activity is also activated by long-chain free fatty-acids. The histone deacetylase activity is specifically repressed by long non-coding RNA lncPRESS1, which binds to SIRT6 and prevents chromatin-binding, thereby promoting stem cell pluripotency. Due to its essential role as tumor suppressor and involvement in DNA repair and life span, extensive research is made for the identification of small compound regulators of SIRT6. Nitro-fatty acids (nitro-oleic acid and nitro-conjugated linoleic acid) strongly stimulate the protein-lysine deacetylase activity by forming a covalent Michael adduct formation with Cys-18. Activated by UBCS039 (4-(pyridin-3-yl)-4,5- dihydropyrrolo[1,2-a]quinoxaline). Inhibited by non-selective hydroxamate trichostatin A inhibitor. Deacetylase activity is activated by fluvastatin and quercetin-based compounds. The protein-lysine deacetylase activity, but not the defatty-acylase activity, is specifically activated by MDL-800 and MDL-801 activators in vivo, enhancing the histone deacetylase and tumor suppressor activities. MDL-800 and MDL-801 selectively activate SIRT6 and not other members of the sirtuin family. The binding-mode of MDL-801 is however subject to discussion. In terms of biological role, NAD-dependent protein deacetylase, deacylase and mono-ADP-ribosyltransferase that plays an essential role in DNA damage repair, telomere maintenance, metabolic homeostasis, inflammation, tumorigenesis and aging. Displays protein-lysine deacetylase or defatty-acylase (demyristoylase and depalmitoylase) activity, depending on the context. Acts as a key histone deacetylase by catalyzing deacetylation of histone H3 at 'Lys-9', 'Lys-18' and 'Lys-56' (H3K9ac, H3K18ac and H3K56ac, respectively), suppressing target gene expression of several transcription factors, including NF-kappa-B. Acts as an inhibitor of transcription elongation by mediating deacetylation of H3K9ac and H3K56ac, preventing release of NELFE from chromatin and causing transcriptional pausing. Involved in DNA repair by promoting double-strand break (DSB) repair: acts as a DSB sensor by recognizing and binding DSB sites, leading to (1) recruitment of DNA repair proteins, such as SMARCA5/SNF2H, and (2) deacetylation of histone H3K9ac and H3K56ac. SIRT6 participation to DSB repair is probably involved in extension of life span. Also promotes DNA repair by deacetylating non-histone proteins, such as DDB2 and p53/TP53. Specifically deacetylates H3K18ac at pericentric heterochromatin, thereby maintaining pericentric heterochromatin silencing at centromeres and protecting against genomic instability and cellular senescence. Involved in telomere maintenance by catalyzing deacetylation of histone H3 in telomeric chromatin, regulating telomere position effect and telomere movement in response to DNA damage. Required for embryonic stem cell differentiation by mediating histone deacetylation of H3K9ac. Plays a major role in metabolism by regulating processes such as glycolysis, gluconeogenesis, insulin secretion and lipid metabolism. Inhibits glycolysis via histone deacetylase activity and by acting as a corepressor of the transcription factor HIF1A, thereby controlling the expression of multiple glycolytic genes. Has tumor suppressor activity by repressing glycolysis, thereby inhibiting the Warburg effect. Also regulates glycolysis and tumorigenesis by mediating deacetylation and nuclear export of non-histone proteins, such as isoform M2 of PKM (PKM2). Acts as a negative regulator of gluconeogenesis by mediating deacetylation of non-histone proteins, such as FOXO1 and KAT2A/GCN5. Promotes beta-oxidation of fatty acids during fasting by catalyzing deacetylation of NCOA2, inducing coactivation of PPARA. Acts as a regulator of lipid catabolism in brown adipocytes, both by catalyzing deacetylation of histones and non-histone proteins, such as FOXO1. Also acts as a regulator of circadian rhythms, both by regulating expression of clock-controlled genes involved in lipid and carbohydrate metabolism, and by catalyzing deacetylation of PER2. The defatty-acylase activity is specifically involved in regulation of protein secretion. Has high activity toward long-chain fatty acyl groups and mediates protein-lysine demyristoylation and depalmitoylation of target proteins, such as RRAS2 and TNF, thereby regulating their secretion. Also acts as a mono-ADP-ribosyltransferase by mediating mono-ADP-ribosylation of PARP1, TRIM28/KAP1 or SMARCC2/BAF170. Mono-ADP-ribosyltransferase activity is involved in DNA repair, cellular senescence, repression of LINE-1 retrotransposon elements and regulation of transcription. This is NAD-dependent protein deacylase sirtuin-6 from Homo sapiens (Human).